A 158-amino-acid chain; its full sequence is 6,7-dimethyl-8-ribityllumazine synthase (158 aa).

Residues F23, 61–63 (SFE), and 85–87 (AVI) contribute to the 5-amino-6-(D-ribitylamino)uracil site. 90–91 (ET) contacts (2S)-2-hydroxy-3-oxobutyl phosphate. Residue H93 is the Proton donor of the active site. F118 contacts 5-amino-6-(D-ribitylamino)uracil. R132 serves as a coordination point for (2S)-2-hydroxy-3-oxobutyl phosphate.

It belongs to the DMRL synthase family.

It carries out the reaction (2S)-2-hydroxy-3-oxobutyl phosphate + 5-amino-6-(D-ribitylamino)uracil = 6,7-dimethyl-8-(1-D-ribityl)lumazine + phosphate + 2 H2O + H(+). Its pathway is cofactor biosynthesis; riboflavin biosynthesis; riboflavin from 2-hydroxy-3-oxobutyl phosphate and 5-amino-6-(D-ribitylamino)uracil: step 1/2. Functionally, catalyzes the formation of 6,7-dimethyl-8-ribityllumazine by condensation of 5-amino-6-(D-ribitylamino)uracil with 3,4-dihydroxy-2-butanone 4-phosphate. This is the penultimate step in the biosynthesis of riboflavin. The polypeptide is 6,7-dimethyl-8-ribityllumazine synthase (Prochlorococcus marinus (strain MIT 9312)).